The following is a 433-amino-acid chain: Meiotically up-regulated gene 131 protein (433 aa).

The segment covering 401–412 (LSSQGREISNTL) has biased composition (polar residues). Residues 401 to 433 (LSSQGREISNTLSRKRGAKGSNPFEIENMMPHA) form a disordered region.

This sequence belongs to the UPF0300 family.

The protein resides in the golgi apparatus. Functionally, has a role in meiosis. The sequence is that of Meiotically up-regulated gene 131 protein (mug131) from Schizosaccharomyces pombe (strain 972 / ATCC 24843) (Fission yeast).